The sequence spans 393 residues: Riboflavin biosynthesis protein RibBA (393 aa).

The segment at 1 to 200 (MQFDTIELAI…IKSLVAFRKA (200 aa)) is DHBP synthase. Residues 27–28 (RE), Asp-32, 139–143 (RNGHT), and Glu-163 each bind D-ribulose 5-phosphate. Glu-28 provides a ligand contact to Mg(2+). His-142 lines the Mg(2+) pocket. A GTP cyclohydrolase II region spans residues 201 to 393 (VELNVNLKAK…TKKNKMGHLI (193 aa)). GTP is bound at residue 249-253 (RMHSA). Residues Cys-254, Cys-265, and Cys-267 each contribute to the Zn(2+) site. GTP contacts are provided by residues Gln-270, 291–293 (EGR), and Thr-313. The active-site Proton acceptor; for GTP cyclohydrolase activity is the Asp-325. Arg-327 serves as the catalytic Nucleophile; for GTP cyclohydrolase activity. 2 residues coordinate GTP: Ser-348 and Lys-353.

This sequence in the N-terminal section; belongs to the DHBP synthase family. In the C-terminal section; belongs to the GTP cyclohydrolase II family. It depends on Mg(2+) as a cofactor. Mn(2+) is required as a cofactor. Requires Zn(2+) as cofactor.

It carries out the reaction D-ribulose 5-phosphate = (2S)-2-hydroxy-3-oxobutyl phosphate + formate + H(+). The catalysed reaction is GTP + 4 H2O = 2,5-diamino-6-hydroxy-4-(5-phosphoribosylamino)-pyrimidine + formate + 2 phosphate + 3 H(+). Its pathway is cofactor biosynthesis; riboflavin biosynthesis; 2-hydroxy-3-oxobutyl phosphate from D-ribulose 5-phosphate: step 1/1. The protein operates within cofactor biosynthesis; riboflavin biosynthesis; 5-amino-6-(D-ribitylamino)uracil from GTP: step 1/4. Catalyzes the conversion of D-ribulose 5-phosphate to formate and 3,4-dihydroxy-2-butanone 4-phosphate. Its function is as follows. Catalyzes the conversion of GTP to 2,5-diamino-6-ribosylamino-4(3H)-pyrimidinone 5'-phosphate (DARP), formate and pyrophosphate. This chain is Riboflavin biosynthesis protein RibBA, found in Staphylococcus epidermidis (strain ATCC 12228 / FDA PCI 1200).